The sequence spans 267 residues: Undecaprenyl-diphosphatase (267 aa).

Transmembrane regions (helical) follow at residues 4–24 (LYALILGIIEGLTEFLPISST), 41–61 (FWKSFLIIIQLGSILAVIFVF), 69–89 (LDIWLKLAVGFFPTGVIGLFV), 96–116 (LFNGWVVVGMLIFGGVVFILI), 173–193 (AAEFSFLLAIPTMIIATAYSI), 207–227 (IPLGIGFITAFIVAVLVIKFF), and 239–259 (FGIYRIILGFVFFYLYYSGIL).

The protein belongs to the UppP family.

The protein localises to the cell inner membrane. The catalysed reaction is di-trans,octa-cis-undecaprenyl diphosphate + H2O = di-trans,octa-cis-undecaprenyl phosphate + phosphate + H(+). In terms of biological role, catalyzes the dephosphorylation of undecaprenyl diphosphate (UPP). Confers resistance to bacitracin. The polypeptide is Undecaprenyl-diphosphatase (Campylobacter jejuni subsp. jejuni serotype O:23/36 (strain 81-176)).